We begin with the raw amino-acid sequence, 626 residues long: E3 ubiquitin-protein ligase CHFR (626 aa).

An FHA domain is found at 34–85 (WTIGRKKACDLSFPGNKLVSGEHCKITVNEESGSVSLEDTSTNGTVINKLKV). Composition is skewed to polar residues over residues 123-133 (EDSMQNPADTS) and 140-149 (TQTLSSQDDQ). 2 disordered regions span residues 123 to 170 (EDSM…TPTT) and 188 to 229 (PGVQ…MRTE). Residues 158–170 (STSTSSLFSTPTT) show a composition bias toward low complexity. Over residues 194-203 (SGEKSGESLE) the composition is skewed to basic and acidic residues. The RING-type zinc-finger motif lies at 267–306 (CIICQELLHDCVSLQPCMHTFCAACYSGWMERSSLCPTCR). Disordered regions lie at residues 351–387 (DMLQ…ISQP) and 402–428 (IQPP…TSTN). A compositionally biased stretch (acidic residues) spans 363 to 381 (DEEGSSEDLLELSDVDSES). Residues 416-428 (SRTQGDAPSTSTN) are compositionally biased toward polar residues. The PBZ-type zinc finger occupies 595 to 617 (PNCYWGRNCRTQVKAHHAMKFNH).

The protein belongs to the CHFR family.

The protein localises to the nucleus. Its subcellular location is the PML body. The enzyme catalyses S-ubiquitinyl-[E2 ubiquitin-conjugating enzyme]-L-cysteine + [acceptor protein]-L-lysine = [E2 ubiquitin-conjugating enzyme]-L-cysteine + N(6)-ubiquitinyl-[acceptor protein]-L-lysine.. It participates in protein modification; protein ubiquitination. Its function is as follows. E3 ubiquitin-protein ligase that functions in the antephase checkpoint by actively delaying passage into mitosis in response to microtubule poisons. Acts in early prophase before chromosome condensation, when the centrosome move apart from each other along the periphery of the nucleus. Probably involved in signaling the presence of mitotic stress caused by microtubule poisons by mediating the 'Lys-48'-linked ubiquitination of target proteins, leading to their degradation by the proteasome. May also promote the formation of 'Lys-63'-linked polyubiquitin chains and functions with the specific ubiquitin-conjugating ubc13-mms2 (ube2n-ube2v2) heterodimer. Substrates that are polyubiquitinated at 'Lys-63' are usually not targeted for degradation, but are rather involved in signaling cellular stress. This is E3 ubiquitin-protein ligase CHFR (chfr) from Xenopus tropicalis (Western clawed frog).